The chain runs to 388 residues: Quinolone resistance protein NorA (388 aa).

12 consecutive transmembrane segments (helical) span residues 5 to 25 (IFVLYFNIFLIFLGIGLVIPV), 42 to 62 (LLVAAFALSQMIISPFGGTLA), 69 to 89 (LIICIGLILFSVSEFMFAVGH), 99 to 119 (VIGGMSAGMVMPGVTGLIADI), 129 to 149 (FGYMSAIINSGFILGPGIGGF), 157 to 177 (MPFYFAGALGILAFIMSIVLI), 201 to 221 (WKVFITPVILTLVLSLGLSAF), 239 to 259 (DISIAITGGGIFGALFQIYFF), 269 to 289 (LTFIAWSLLYSVVVLILLVFA), 293 to 313 (WSIMLISFVVFIGFDMIRPAI), 331 to 351 (LNSTFTSMGNFIGPLIAGALF), and 355 to 375 (IEAPIYMAIGVSLAGVVIVLI).

The protein belongs to the major facilitator superfamily. TCR/Tet family.

The protein resides in the cell membrane. Functionally, involved in quinolone resistance. May constitute a membrane-associated active efflux pump of hydrophilic quinolones. This is Quinolone resistance protein NorA (norA) from Staphylococcus aureus (strain MSSA476).